A 310-amino-acid chain; its full sequence is Porphobilinogen deaminase (310 aa).

Cys236 carries the post-translational modification S-(dipyrrolylmethanemethyl)cysteine.

This sequence belongs to the HMBS family. In terms of assembly, monomer. Dipyrromethane is required as a cofactor.

It catalyses the reaction 4 porphobilinogen + H2O = hydroxymethylbilane + 4 NH4(+). It participates in porphyrin-containing compound metabolism; protoporphyrin-IX biosynthesis; coproporphyrinogen-III from 5-aminolevulinate: step 2/4. Functionally, tetrapolymerization of the monopyrrole PBG into the hydroxymethylbilane pre-uroporphyrinogen in several discrete steps. This Nitratiruptor sp. (strain SB155-2) protein is Porphobilinogen deaminase.